A 714-amino-acid polypeptide reads, in one-letter code: Glutamine-dependent NAD(+) synthetase (714 aa).

The CN hydrolase domain occupies 5–275 (ITLATCNLNQ…VEVVTATVDL (271 aa)). The active-site Proton acceptor; for glutaminase activity is Glu45. Residue Lys114 is the For glutaminase activity of the active site. Cys175 (nucleophile; for glutaminase activity) is an active-site residue. The interval 329–714 (YHSPEEEIAL…GSTLDIMSID (386 aa)) is ligase. 359–366 (PLSGGIDS) serves as a coordination point for ATP. Residue Ser361 is part of the active site.

This sequence in the C-terminal section; belongs to the NAD synthetase family.

It carries out the reaction deamido-NAD(+) + L-glutamine + ATP + H2O = L-glutamate + AMP + diphosphate + NAD(+) + H(+). It participates in cofactor biosynthesis; NAD(+) biosynthesis; NAD(+) from deamido-NAD(+) (L-Gln route): step 1/1. In Saccharomyces cerevisiae (strain ATCC 204508 / S288c) (Baker's yeast), this protein is Glutamine-dependent NAD(+) synthetase (QNS1).